A 181-amino-acid polypeptide reads, in one-letter code: Inner membrane-spanning protein YciB (181 aa).

The next 5 helical transmembrane spans lie at 10–30, 50–70, 72–92, 118–138, and 148–168; these read LVIF…GALI, MHLI…VFHD, AFIK…LGVS, VTWY…YVAF, and FKVF…VFYL.

Belongs to the YciB family.

Its subcellular location is the cell inner membrane. Its function is as follows. Plays a role in cell envelope biogenesis, maintenance of cell envelope integrity and membrane homeostasis. This Shewanella oneidensis (strain ATCC 700550 / JCM 31522 / CIP 106686 / LMG 19005 / NCIMB 14063 / MR-1) protein is Inner membrane-spanning protein YciB.